A 501-amino-acid polypeptide reads, in one-letter code: ATP synthase subunit alpha (501 aa).

169–176 contacts ATP; that stretch reads GDRQTGKT.

This sequence belongs to the ATPase alpha/beta chains family. In terms of assembly, F-type ATPases have 2 components, CF(1) - the catalytic core - and CF(0) - the membrane proton channel. CF(1) has five subunits: alpha(3), beta(3), gamma(1), delta(1), epsilon(1). CF(0) has three main subunits: a(1), b(2) and c(9-12). The alpha and beta chains form an alternating ring which encloses part of the gamma chain. CF(1) is attached to CF(0) by a central stalk formed by the gamma and epsilon chains, while a peripheral stalk is formed by the delta and b chains.

It localises to the cell membrane. It carries out the reaction ATP + H2O + 4 H(+)(in) = ADP + phosphate + 5 H(+)(out). Functionally, produces ATP from ADP in the presence of a proton gradient across the membrane. The alpha chain is a regulatory subunit. This is ATP synthase subunit alpha from Streptococcus equi subsp. equi (strain 4047).